We begin with the raw amino-acid sequence, 587 residues long: Putative phagocytic receptor 1b (587 aa).

The first 23 residues, 1 to 23 (MRLQILLIYLICIIVSSIVLVES), serve as a signal peptide directing secretion. Helical transmembrane passes span 223–243 (LSVM…AIMI), 294–314 (IGWQ…FGMF), 319–339 (GGNM…ISGY), 354–374 (AWNI…VVIL), 390–410 (ILTM…LTVV), 448–468 (ILIA…YIFN), 480–500 (GILC…TVAL), 524–544 (VVFI…MYGL), and 556–576 (IVCF…SLIF).

Belongs to the nonaspanin (TM9SF) (TC 9.A.2) family.

The protein resides in the membrane. Functionally, involved in adhesion and phagocytosis of hydrophilic particles. This is Putative phagocytic receptor 1b (phg1b) from Dictyostelium discoideum (Social amoeba).